The sequence spans 380 residues: Guanine nucleotide-binding protein alpha-1 subunit (380 aa).

The interval Met-1–Ile-25 is disordered. Residue Gly-2 is the site of N-myristoyl glycine attachment. Cys-5 carries the S-palmitoyl cysteine lipid modification. The span at Ser-10 to Ile-25 shows a compositional bias: basic and acidic residues. The G-alpha domain maps to His-38–Thr-380. Residues Lys-41 to Thr-54 form a G1 motif region. GTP is bound by residues Glu-49, Ser-50, Gly-51, Lys-52, Ser-53, Thr-54, Asp-163, Leu-188, Tyr-189, Thr-194, Gly-222, Asn-288, Lys-289, Asp-291, and Ala-356. Ser-53 lines the Mg(2+) pocket. Residues Asp-186 to Thr-194 are G2 motif. Thr-194 serves as a coordination point for Mg(2+). The G3 motif stretch occupies residues Tyr-215–Arg-224. The interval Ile-284–Asp-291 is G4 motif. A G5 motif region spans residues Thr-354–Gln-359.

This sequence belongs to the G-alpha family. In terms of assembly, g proteins are composed of 3 units; alpha, beta and gamma. The alpha chain contains the guanine nucleotide binding site. Interacts with COLD1. Mg(2+) serves as cofactor.

The protein resides in the cell membrane. In terms of biological role, guanine nucleotide-binding proteins (G proteins) are involved as modulators or transducers in various transmembrane signaling systems. May function in a signal transduction pathway required for normal growth and development of internodes, leaves, panicles and seeds. Involved in gibberellin signal transduction. Involved in R gene-mediated disease resistance. Functions upstream of the small GTPase RAC1 in the early steps of signaling. Involved in brassinosteroid response. May not be a signaling molecule in BRI1-mediated perception or transduction. This is Guanine nucleotide-binding protein alpha-1 subunit (GPA1) from Oryza sativa subsp. indica (Rice).